The sequence spans 37 residues: Esculentin-2SE (37 aa).

A disulfide bridge links Cys31 with Cys37.

As to expression, expressed by the skin glands.

It is found in the secreted. Functionally, mast cell degranulating peptide. Causes histamine release from rat peritoneal mast cells in vitro. Has antibacterial activity against the Gram-negative bacterium E.coli K12 and Gram-positive bacterium M.luteus NCT C2665. The chain is Esculentin-2SE from Lithobates sevosus (Dusky gopher frog).